Here is a 232-residue protein sequence, read N- to C-terminus: Glutathione-specific gamma-glutamylcyclotransferase (232 aa).

10–15 contacts substrate; that stretch reads VLGYGS. Glutamate 115 functions as the Proton acceptor in the catalytic mechanism.

Belongs to the gamma-glutamylcyclotransferase family. ChaC subfamily.

The protein resides in the cytoplasm. Its subcellular location is the nucleus. The enzyme catalyses glutathione = L-cysteinylglycine + 5-oxo-L-proline. In terms of biological role, catalyzes the cleavage of glutathione into 5-oxo-L-proline and a Cys-Gly dipeptide. Acts specifically on glutathione, but not on other gamma-glutamyl peptides. Allows utilization of gluthathione through subsequent cleavage of the Cys-Gly dipeptide by Cys-Gly metallodipeptidase DUG1. This chain is Glutathione-specific gamma-glutamylcyclotransferase, found in Saccharomyces cerevisiae (strain ATCC 204508 / S288c) (Baker's yeast).